The chain runs to 507 residues: ATP synthase subunit alpha, chloroplastic (507 aa).

Residue 170–177 (GDRQTGKT) participates in ATP binding.

Belongs to the ATPase alpha/beta chains family. As to quaternary structure, F-type ATPases have 2 components, CF(1) - the catalytic core - and CF(0) - the membrane proton channel. CF(1) has five subunits: alpha(3), beta(3), gamma(1), delta(1), epsilon(1). CF(0) has four main subunits: a, b, b' and c.

It is found in the plastid. The protein localises to the chloroplast thylakoid membrane. It catalyses the reaction ATP + H2O + 4 H(+)(in) = ADP + phosphate + 5 H(+)(out). Its function is as follows. Produces ATP from ADP in the presence of a proton gradient across the membrane. The alpha chain is a regulatory subunit. This Ceratophyllum demersum (Rigid hornwort) protein is ATP synthase subunit alpha, chloroplastic.